A 129-amino-acid polypeptide reads, in one-letter code: Small ribosomal subunit protein uS11 (129 aa).

Belongs to the universal ribosomal protein uS11 family. Part of the 30S ribosomal subunit. Interacts with proteins S7 and S18. Binds to IF-3.

Located on the platform of the 30S subunit, it bridges several disparate RNA helices of the 16S rRNA. Forms part of the Shine-Dalgarno cleft in the 70S ribosome. The protein is Small ribosomal subunit protein uS11 of Bradyrhizobium sp. (strain ORS 278).